The following is a 590-amino-acid chain: Ras-specific guanine nucleotide-releasing factor RalGPS2 (590 aa).

The Ras-GEF domain maps to 49-287; sequence TPEEYAGQIT…YKLSLKIEPG (239 aa). Residues 288–319 form a disordered region; that stretch reads ASTPRSAASREDLAGPDIGASPQGGRKSSAAA. Residues Ser-293, Ser-296, and Ser-308 each carry the phosphoserine modification. A PXXP motif is present at residues 331–334; the sequence is PQTP. Position 333 is a phosphothreonine (Thr-333). Phosphoserine is present on residues Ser-336 and Ser-350. Thr-368 carries the post-translational modification Phosphothreonine. The tract at residues 380 to 413 is disordered; that stretch reads DSVMEPHAPSRGQAESSTLSSGISIGSSDGSELS. Ser-381 carries the phosphoserine modification. Residues 394–410 are compositionally biased toward low complexity; that stretch reads ESSTLSSGISIGSSDGS. The residue at position 429 (Ser-429) is a Phosphoserine. In terms of domain architecture, PH spans 464–576; sequence AVTIQGVLRR…WFKHLSAACQ (113 aa). The interval 466 to 590 is required for stimulation of nucleotide exchange by RALA; the sequence is TIQGVLRRKT…QVPTNLMTFE (125 aa).

Interacts with RALA. Interacts with the SH3 domains of GRB2 and PLCG1. As to expression, abundant in brain and testis.

It localises to the cytoplasm. The protein resides in the cell membrane. Guanine nucleotide exchange factor for the small GTPase RALA. May be involved in cytoskeletal organization. May also be involved in the stimulation of transcription in a Ras-independent fashion. The protein is Ras-specific guanine nucleotide-releasing factor RalGPS2 (Ralgps2) of Mus musculus (Mouse).